The following is a 408-amino-acid chain: LL-diaminopimelate aminotransferase (408 aa).

Substrate contacts are provided by Tyr15 and Gly42. Pyridoxal 5'-phosphate contacts are provided by residues Tyr72, 108–109 (SK), Tyr132, Asn187, Tyr218, and 246–248 (SFS). 3 residues coordinate substrate: Lys109, Tyr132, and Asn187. Lys249 bears the N6-(pyridoxal phosphate)lysine mark. Pyridoxal 5'-phosphate is bound by residues Arg257 and Asn292. Residues Asn292 and Arg388 each coordinate substrate.

It belongs to the class-I pyridoxal-phosphate-dependent aminotransferase family. LL-diaminopimelate aminotransferase subfamily. As to quaternary structure, homodimer. The cofactor is pyridoxal 5'-phosphate.

The catalysed reaction is (2S,6S)-2,6-diaminopimelate + 2-oxoglutarate = (S)-2,3,4,5-tetrahydrodipicolinate + L-glutamate + H2O + H(+). Its pathway is amino-acid biosynthesis; L-lysine biosynthesis via DAP pathway; LL-2,6-diaminopimelate from (S)-tetrahydrodipicolinate (aminotransferase route): step 1/1. Functionally, involved in the synthesis of meso-diaminopimelate (m-DAP or DL-DAP), required for both lysine and peptidoglycan biosynthesis. Catalyzes the direct conversion of tetrahydrodipicolinate to LL-diaminopimelate. This Prochlorococcus marinus (strain MIT 9312) protein is LL-diaminopimelate aminotransferase.